Reading from the N-terminus, the 272-residue chain is 2,3,4,5-tetrahydropyridine-2,6-dicarboxylate N-succinyltransferase (272 aa).

Substrate contacts are provided by Arg-104 and Asp-141.

Belongs to the transferase hexapeptide repeat family. In terms of assembly, homotrimer.

Its subcellular location is the cytoplasm. It catalyses the reaction (S)-2,3,4,5-tetrahydrodipicolinate + succinyl-CoA + H2O = (S)-2-succinylamino-6-oxoheptanedioate + CoA. It functions in the pathway amino-acid biosynthesis; L-lysine biosynthesis via DAP pathway; LL-2,6-diaminopimelate from (S)-tetrahydrodipicolinate (succinylase route): step 1/3. The chain is 2,3,4,5-tetrahydropyridine-2,6-dicarboxylate N-succinyltransferase from Alkalilimnicola ehrlichii (strain ATCC BAA-1101 / DSM 17681 / MLHE-1).